The following is a 231-amino-acid chain: Lipoprotein-releasing system ATP-binding protein LolD (231 aa).

Residues 11–231 (LRLEGLTRRF…TLRDGKLVPF (221 aa)) form the ABC transporter domain. Position 47–54 (47–54 (APSGTGKS)) interacts with ATP.

Belongs to the ABC transporter superfamily. Lipoprotein translocase (TC 3.A.1.125) family. As to quaternary structure, the complex is composed of two ATP-binding proteins (LolD) and two transmembrane proteins (LolC and LolE).

It localises to the cell inner membrane. Part of the ABC transporter complex LolCDE involved in the translocation of mature outer membrane-directed lipoproteins, from the inner membrane to the periplasmic chaperone, LolA. Responsible for the formation of the LolA-lipoprotein complex in an ATP-dependent manner. This is Lipoprotein-releasing system ATP-binding protein LolD from Gluconobacter oxydans (strain 621H) (Gluconobacter suboxydans).